The primary structure comprises 105 residues: Probable molt-inhibiting hormone (105 aa).

The first 28 residues, 1 to 28, serve as a signal peptide directing secretion; it reads MYRMPMRFWLTAVVMVVVGALLLDTASA. Intrachain disulfides connect cysteine 35-cysteine 72, cysteine 52-cysteine 68, and cysteine 55-cysteine 81.

Belongs to the arthropod CHH/MIH/GIH/VIH hormone family. In terms of tissue distribution, expressed in the postmolt, intermolt, and premolt stages of the shrimp eyestalks and the brain.

It is found in the secreted. In terms of biological role, inhibits Y-organs where molting hormone (ecdysteroid) is secreted. A molting cycle is initiated when MIH secretion diminishes or stops. The polypeptide is Probable molt-inhibiting hormone (Metapenaeus ensis (Greasyback shrimp)).